The following is a 1140-amino-acid chain: Centrosomal protein of 135 kDa (1140 aa).

The tract at residues 11–64 (NIRKRLDQLGYRQTLTVECLPLVEKLFSDLVHTTESLRQSKLSAVKAEKESANF) is homodimerization. 2 coiled-coil regions span residues 75–151 (NARL…KNLH) and 199–416 (LQVA…FAVT). Phosphoserine occurs at positions 383 and 439. 3 coiled-coil regions span residues 447–644 (LKGI…LENK), 668–1036 (SLRI…LESL), and 1079–1113 (NTMLRAKVAQLQTDYDALKRQISTERYERERAIQE). Ser688 bears the Phosphoserine mark. A disordered region spans residues 1114 to 1140 (MRRHGLATPPLSSTLRSPSHSPEHRNV). Thr1121 carries the post-translational modification Phosphothreonine. A compositionally biased stretch (low complexity) spans 1121 to 1133 (TPPLSSTLRSPSH). Ser1130 bears the Phosphoserine mark.

This sequence belongs to the CEP135/TSGA10 family. In terms of assembly, homodimer. Interacts with DCTN2. Interacts with CEP250.

The protein resides in the cytoplasm. Its subcellular location is the cytoskeleton. The protein localises to the microtubule organizing center. It is found in the centrosome. It localises to the centriole. Centrosomal microtubule-binding protein involved in centriole biogenesis. Acts as a scaffolding protein during early centriole biogenesis. Required for the targeting of centriole satellite proteins to centrosomes such as of PCM1, SSX2IP and CEP290 and recruitment of WRAP73 to centrioles. Also required for centriole-centriole cohesion during interphase by acting as a platform protein for CEP250 at the centriole. Required for the recruitment of CEP295 to the proximal end of new-born centrioles at the centriolar microtubule wall during early S phase in a PLK4-dependent manner. The sequence is that of Centrosomal protein of 135 kDa from Homo sapiens (Human).